Consider the following 268-residue polypeptide: Tryptophan synthase alpha chain (268 aa).

Residues Glu49 and Asp60 each act as proton acceptor in the active site.

The protein belongs to the TrpA family. Tetramer of two alpha and two beta chains.

The catalysed reaction is (1S,2R)-1-C-(indol-3-yl)glycerol 3-phosphate + L-serine = D-glyceraldehyde 3-phosphate + L-tryptophan + H2O. Its pathway is amino-acid biosynthesis; L-tryptophan biosynthesis; L-tryptophan from chorismate: step 5/5. The alpha subunit is responsible for the aldol cleavage of indoleglycerol phosphate to indole and glyceraldehyde 3-phosphate. The sequence is that of Tryptophan synthase alpha chain from Escherichia coli O127:H6 (strain E2348/69 / EPEC).